Consider the following 892-residue polypeptide: Isoleucine--tRNA ligase (892 aa).

A 'HIGH' region motif is present at residues 60–70; sequence PYANGSIHIGH. Glu-552 contacts L-isoleucyl-5'-AMP. Residues 593 to 597 carry the 'KMSKS' region motif; that stretch reads KMSKS. Position 596 (Lys-596) interacts with ATP. Positions 862, 865, 879, and 882 each coordinate Zn(2+).

It belongs to the class-I aminoacyl-tRNA synthetase family. IleS type 1 subfamily. In terms of assembly, monomer. Requires Zn(2+) as cofactor.

The protein localises to the cytoplasm. The enzyme catalyses tRNA(Ile) + L-isoleucine + ATP = L-isoleucyl-tRNA(Ile) + AMP + diphosphate. Functionally, catalyzes the attachment of isoleucine to tRNA(Ile). As IleRS can inadvertently accommodate and process structurally similar amino acids such as valine, to avoid such errors it has two additional distinct tRNA(Ile)-dependent editing activities. One activity is designated as 'pretransfer' editing and involves the hydrolysis of activated Val-AMP. The other activity is designated 'posttransfer' editing and involves deacylation of mischarged Val-tRNA(Ile). This is Isoleucine--tRNA ligase from Mycoplasmopsis agalactiae (strain NCTC 10123 / CIP 59.7 / PG2) (Mycoplasma agalactiae).